The sequence spans 585 residues: Proline--tRNA ligase (585 aa).

An Isoglutamyl lysine isopeptide (Lys-Gln) (interchain with Q-Cter in protein Pup) cross-link involves residue lysine 173.

Belongs to the class-II aminoacyl-tRNA synthetase family. ProS type 1 subfamily. In terms of assembly, homodimer.

The protein localises to the cytoplasm. It catalyses the reaction tRNA(Pro) + L-proline + ATP = L-prolyl-tRNA(Pro) + AMP + diphosphate. Catalyzes the attachment of proline to tRNA(Pro) in a two-step reaction: proline is first activated by ATP to form Pro-AMP and then transferred to the acceptor end of tRNA(Pro). As ProRS can inadvertently accommodate and process non-cognate amino acids such as alanine and cysteine, to avoid such errors it has two additional distinct editing activities against alanine. One activity is designated as 'pretransfer' editing and involves the tRNA(Pro)-independent hydrolysis of activated Ala-AMP. The other activity is designated 'posttransfer' editing and involves deacylation of mischarged Ala-tRNA(Pro). The misacylated Cys-tRNA(Pro) is not edited by ProRS. This is Proline--tRNA ligase (proS) from Mycolicibacterium smegmatis (strain ATCC 700084 / mc(2)155) (Mycobacterium smegmatis).